Here is a 41-residue protein sequence, read N- to C-terminus: Photosystem I reaction center subunit IX (41 aa).

Residues 7–27 (YLSTAPVLLTLWMTFTAGFII) traverse the membrane as a helical segment.

It belongs to the PsaJ family.

Its subcellular location is the plastid. The protein resides in the chloroplast thylakoid membrane. Functionally, may help in the organization of the PsaE and PsaF subunits. This chain is Photosystem I reaction center subunit IX, found in Trieres chinensis (Marine centric diatom).